Reading from the N-terminus, the 427-residue chain is UPF0761 membrane protein Cphamn1_1013 (427 aa).

6 helical membrane passes run 51–71 (LLSL…SPVF), 107–127 (TVPT…ISTI), 147–167 (FTLY…GLVA), 188–208 (ILSY…YMLV), 218–238 (AVSG…WFSF), and 251–271 (GALS…VVAL).

Belongs to the UPF0761 family.

The protein resides in the cell inner membrane. In Chlorobium phaeobacteroides (strain BS1), this protein is UPF0761 membrane protein Cphamn1_1013.